The following is a 341-amino-acid chain: MKALSKLKAEEGIWMTDVPVPELGHNDLLIKIRKTAICGTDVHIYNWDEWSQKTIPVPMVVGHEYVGEVVGIGQEVKGFKIGDRVSGEGHITCGHCRNCRGGRTHLCRNTIGVGVNRPGCFAEYLVIPAFNAFKIPDNISDDLASIFDPFGNAVHTALSFDLVGEDVLVSGAGPIGIMAAAVAKHVGARNVVITDVNEYRLELARKMGITRAVNVAKENLNDVMAELGMAEGFDIGLEMSGAPPAFRTMLDTMNHGGRIAMLGIPPSDMSIDWTKVIFKGLFIKGIYGREMFETWYKMAALIQSGLDLSPIITHRFSIDDFQKGFDAMRSGQSGKVILSWD.

Cys38 serves as a coordination point for Zn(2+). Catalysis depends on charge relay system residues Thr40 and His43. The Zn(2+) site is built by His63, Glu64, Cys93, Cys96, Cys99, and Cys107. NAD(+)-binding positions include Ile175, Asp195, Arg200, Leu262 to Ile264, and Ile286 to Tyr287.

It belongs to the zinc-containing alcohol dehydrogenase family. As to quaternary structure, homotetramer. It depends on Zn(2+) as a cofactor.

It is found in the cytoplasm. The enzyme catalyses L-threonine + NAD(+) = (2S)-2-amino-3-oxobutanoate + NADH + H(+). It functions in the pathway amino-acid degradation; L-threonine degradation via oxydo-reductase pathway; glycine from L-threonine: step 1/2. In terms of biological role, catalyzes the NAD(+)-dependent oxidation of L-threonine to 2-amino-3-ketobutyrate. In Shigella sonnei (strain Ss046), this protein is L-threonine 3-dehydrogenase.